Reading from the N-terminus, the 215-residue chain is Cytochrome b6 (215 aa).

The chain crosses the membrane as a helical span at residues 32 to 52 (IFYCLGGITLTCFLVQVATGF). Cys35 lines the heme c pocket. His86 and His100 together coordinate heme b. 3 helical membrane passes run 90-110 (ASMM…TGGF), 116-136 (LTWV…VTGY), and 186-206 (LHTF…FPMI). His187 and His202 together coordinate heme b.

It belongs to the cytochrome b family. PetB subfamily. As to quaternary structure, the 4 large subunits of the cytochrome b6-f complex are cytochrome b6, subunit IV (17 kDa polypeptide, PetD), cytochrome f and the Rieske protein, while the 4 small subunits are PetG, PetL, PetM and PetN. The complex functions as a dimer. It depends on heme b as a cofactor. The cofactor is heme c.

The protein resides in the plastid. Its subcellular location is the chloroplast thylakoid membrane. Its function is as follows. Component of the cytochrome b6-f complex, which mediates electron transfer between photosystem II (PSII) and photosystem I (PSI), cyclic electron flow around PSI, and state transitions. This Cucumis sativus (Cucumber) protein is Cytochrome b6.